A 361-amino-acid polypeptide reads, in one-letter code: Holliday junction branch migration complex subunit RuvB (361 aa).

The tract at residues 1–181 is large ATPase domain (RuvB-L); the sequence is MKDQRLLDSV…FGIPIRLNFY (181 aa). ATP is bound by residues Leu-20, Arg-21, Gly-62, Lys-65, Thr-66, Thr-67, 128–130, Arg-171, Tyr-181, and Arg-218; that span reads EDY. A Mg(2+)-binding site is contributed by Thr-66. Residues 182 to 252 form a small ATPAse domain (RuvB-S) region; that stretch reads TIEELEYIVQ…VADEALSRLE (71 aa). A head domain (RuvB-H) region spans residues 255–361; sequence HLGLDPLDRR…QTTLWDEADE (107 aa). Positions 291, 310, and 315 each coordinate DNA.

It belongs to the RuvB family. Homohexamer. Forms an RuvA(8)-RuvB(12)-Holliday junction (HJ) complex. HJ DNA is sandwiched between 2 RuvA tetramers; dsDNA enters through RuvA and exits via RuvB. An RuvB hexamer assembles on each DNA strand where it exits the tetramer. Each RuvB hexamer is contacted by two RuvA subunits (via domain III) on 2 adjacent RuvB subunits; this complex drives branch migration. In the full resolvosome a probable DNA-RuvA(4)-RuvB(12)-RuvC(2) complex forms which resolves the HJ.

The protein resides in the cytoplasm. The catalysed reaction is ATP + H2O = ADP + phosphate + H(+). The RuvA-RuvB-RuvC complex processes Holliday junction (HJ) DNA during genetic recombination and DNA repair, while the RuvA-RuvB complex plays an important role in the rescue of blocked DNA replication forks via replication fork reversal (RFR). RuvA specifically binds to HJ cruciform DNA, conferring on it an open structure. The RuvB hexamer acts as an ATP-dependent pump, pulling dsDNA into and through the RuvAB complex. RuvB forms 2 homohexamers on either side of HJ DNA bound by 1 or 2 RuvA tetramers; 4 subunits per hexamer contact DNA at a time. Coordinated motions by a converter formed by DNA-disengaged RuvB subunits stimulates ATP hydrolysis and nucleotide exchange. Immobilization of the converter enables RuvB to convert the ATP-contained energy into a lever motion, pulling 2 nucleotides of DNA out of the RuvA tetramer per ATP hydrolyzed, thus driving DNA branch migration. The RuvB motors rotate together with the DNA substrate, which together with the progressing nucleotide cycle form the mechanistic basis for DNA recombination by continuous HJ branch migration. Branch migration allows RuvC to scan DNA until it finds its consensus sequence, where it cleaves and resolves cruciform DNA. The chain is Holliday junction branch migration complex subunit RuvB from Bartonella quintana (strain Toulouse) (Rochalimaea quintana).